The chain runs to 438 residues: MLSAFISSLRTVDLRRKILFTLGILVLYRVSAALPSPGVNYRHVQQCIQEATAGEAGEIYSLINLFSGGALLKLTVGVMPYITASIIVQLLTVVIPRFEELRKEGQAGQAKMTQYTRYLAIALAVLQATSIVALAANGGLLQGCQEDIISDQSIFSLVVIVLVMTGGAALVMWMGELITERGIGNGMSLLIFVGIAARIPAEGKQILDSRGGVIFAAVCLAALVIIVGVVFVEQGQRRIPVQYAKRMVGRRMYGGTSTYLPLKVNQAGVIPVIFASSLIYIPHLITQLVRSGSGGVGKSWWDKFVGTYLSDPADPVYINIYFGLIIFFTYFYVSVTFNPDERADEMKKFGGFIPGIRPGRPTADYLRYVLSRITLPGSIYLGAIAVLPNLFLQIGNGGEVQNLPFGGTAVLIMIGVGLDTVKQIESQLMQRNYEGFLK.

Transmembrane regions (helical) follow at residues 18–38 (ILFT…PSPG), 76–96 (VGVM…VVIP), 121–141 (IALA…GGLL), 154–174 (IFSL…VMWM), 177–197 (LITE…GIAA), 212–232 (GVIF…VVFV), 269–289 (VIPV…TQLV), 315–335 (PVYI…YVSV), 375–395 (LPGS…LQIG), and 398–418 (GEVQ…GVGL).

Belongs to the SecY/SEC61-alpha family. In terms of assembly, component of the Sec protein translocase complex. Heterotrimer consisting of SecY, SecE and SecG subunits. The heterotrimers can form oligomers, although 1 heterotrimer is thought to be able to translocate proteins. Interacts with the ribosome. Interacts with SecDF, and other proteins may be involved. Interacts with SecA.

The protein localises to the cell membrane. The central subunit of the protein translocation channel SecYEG. Consists of two halves formed by TMs 1-5 and 6-10. These two domains form a lateral gate at the front which open onto the bilayer between TMs 2 and 7, and are clamped together by SecE at the back. The channel is closed by both a pore ring composed of hydrophobic SecY resides and a short helix (helix 2A) on the extracellular side of the membrane which forms a plug. The plug probably moves laterally to allow the channel to open. The ring and the pore may move independently. This is Protein translocase subunit SecY from Mycobacterium leprae (strain TN).